Consider the following 230-residue polypeptide: Cytidylate kinase (230 aa).

13-21 is an ATP binding site; that stretch reads GPAGTGKSS.

The protein belongs to the cytidylate kinase family. Type 1 subfamily.

The protein resides in the cytoplasm. The enzyme catalyses CMP + ATP = CDP + ADP. The catalysed reaction is dCMP + ATP = dCDP + ADP. This chain is Cytidylate kinase, found in Mycobacterium tuberculosis (strain ATCC 25177 / H37Ra).